The following is a 337-amino-acid chain: RNA 3'-terminal phosphate cyclase (337 aa).

ATP contacts are provided by residues glutamine 101 and 282 to 285; that span reads HMSD. Histidine 306 (tele-AMP-histidine intermediate) is an active-site residue.

The protein belongs to the RNA 3'-terminal cyclase family. Type 1 subfamily.

It is found in the cytoplasm. The catalysed reaction is a 3'-end 3'-phospho-ribonucleotide-RNA + ATP = a 3'-end 2',3'-cyclophospho-ribonucleotide-RNA + AMP + diphosphate. Functionally, catalyzes the conversion of 3'-phosphate to a 2',3'-cyclic phosphodiester at the end of RNA. The mechanism of action of the enzyme occurs in 3 steps: (A) adenylation of the enzyme by ATP; (B) transfer of adenylate to an RNA-N3'P to produce RNA-N3'PP5'A; (C) and attack of the adjacent 2'-hydroxyl on the 3'-phosphorus in the diester linkage to produce the cyclic end product. The biological role of this enzyme is unknown but it is likely to function in some aspects of cellular RNA processing. The chain is RNA 3'-terminal phosphate cyclase from Saccharolobus islandicus (strain M.16.27) (Sulfolobus islandicus).